The chain runs to 352 residues: Quinolinate synthase (352 aa).

Residues H48 and S69 each contribute to the iminosuccinate site. C114 provides a ligand contact to [4Fe-4S] cluster. Iminosuccinate contacts are provided by residues 140-142 (YAN) and S157. C201 contributes to the [4Fe-4S] cluster binding site. Residues 227-229 (HPE) and T244 contribute to the iminosuccinate site. C298 is a [4Fe-4S] cluster binding site.

The protein belongs to the quinolinate synthase family. Type 1 subfamily. [4Fe-4S] cluster serves as cofactor.

The protein localises to the cytoplasm. The catalysed reaction is iminosuccinate + dihydroxyacetone phosphate = quinolinate + phosphate + 2 H2O + H(+). It participates in cofactor biosynthesis; NAD(+) biosynthesis; quinolinate from iminoaspartate: step 1/1. Functionally, catalyzes the condensation of iminoaspartate with dihydroxyacetone phosphate to form quinolinate. The chain is Quinolinate synthase from Pseudomonas entomophila (strain L48).